The chain runs to 85 residues: Toxin Cll5c* (85 aa).

Residues 1–17 (MNSLLIITACLVLFVWA) form the signal peptide. The 66-residue stretch at 18 to 83 (KEGYLVNKST…TYPLPNKSCS (66 aa)) folds into the LCN-type CS-alpha/beta domain. 4 disulfide bridges follow: Cys29/Cys82, Cys33/Cys58, Cys42/Cys63, and Cys46/Cys65. Positions 84-85 (KK) are cleaved as a propeptide — removed by a carboxypeptidase.

It belongs to the long (4 C-C) scorpion toxin superfamily. Sodium channel inhibitor family. Beta subfamily. In terms of tissue distribution, expressed by the venom gland.

The protein resides in the secreted. Its function is as follows. Beta toxins bind voltage-independently at site-4 of sodium channels (Nav) and shift the voltage of activation toward more negative potentials thereby affecting sodium channel activation and promoting spontaneous and repetitive firing. In Centruroides limpidus (Mexican scorpion), this protein is Toxin Cll5c*.